Reading from the N-terminus, the 415-residue chain is uncharacterized protein (415 aa).

Positions 276 and 316 each coordinate [4Fe-4S] cluster.

In terms of assembly, homodimer. Requires [4Fe-4S] cluster as cofactor.

This is an uncharacterized protein from Methanocaldococcus jannaschii (strain ATCC 43067 / DSM 2661 / JAL-1 / JCM 10045 / NBRC 100440) (Methanococcus jannaschii).